A 149-amino-acid polypeptide reads, in one-letter code: MSEPIKLHDLRPAKGANKPKTRVGRGEASKGKTAGRGTKGTKARKQVSAAFEGGQMPIHMRLPKLKGFKNPNKVTYQVVNVADLQKHFENGGNVTIADLVSAGLVRAKQPVKVLGDGEITASVNITATKFSASAKQKIEAAGGSVTETK.

A compositionally biased stretch (basic and acidic residues) spans 1–12 (MSEPIKLHDLRP). A disordered region spans residues 1–55 (MSEPIKLHDLRPAKGANKPKTRVGRGEASKGKTAGRGTKGTKARKQVSAAFEGGQ).

Belongs to the universal ribosomal protein uL15 family. Part of the 50S ribosomal subunit.

Its function is as follows. Binds to the 23S rRNA. This Corynebacterium kroppenstedtii (strain DSM 44385 / JCM 11950 / CIP 105744 / CCUG 35717) protein is Large ribosomal subunit protein uL15.